Reading from the N-terminus, the 83-residue chain is Small ribosomal subunit protein bS20 (83 aa).

The protein belongs to the bacterial ribosomal protein bS20 family.

Its function is as follows. Binds directly to 16S ribosomal RNA. In Staphylococcus haemolyticus (strain JCSC1435), this protein is Small ribosomal subunit protein bS20.